Here is a 165-residue protein sequence, read N- to C-terminus: MMIIGIDPGLEFTGWGVVSSTNSQSVCLLDSGVISTRGISRESEKLYKIYVSLLSVLSLYKIDEASIEKVFINSNPRSSMSLCYARAASTISVMSRGIDIYEYSSTAIKKCITGNGMAPKEQVSFMVRSSLGIKQDVEINNHSSDAIAAALCHVYNTRNRNFALK.

Residues aspartate 7, glutamate 68, and histidine 142 contribute to the active site. Mg(2+) contacts are provided by aspartate 7, glutamate 68, and histidine 142.

Belongs to the RuvC family. Homodimer which binds Holliday junction (HJ) DNA. The HJ becomes 2-fold symmetrical on binding to RuvC with unstacked arms; it has a different conformation from HJ DNA in complex with RuvA. In the full resolvosome a probable DNA-RuvA(4)-RuvB(12)-RuvC(2) complex forms which resolves the HJ. It depends on Mg(2+) as a cofactor.

Its subcellular location is the cytoplasm. The catalysed reaction is Endonucleolytic cleavage at a junction such as a reciprocal single-stranded crossover between two homologous DNA duplexes (Holliday junction).. The RuvA-RuvB-RuvC complex processes Holliday junction (HJ) DNA during genetic recombination and DNA repair. Endonuclease that resolves HJ intermediates. Cleaves cruciform DNA by making single-stranded nicks across the HJ at symmetrical positions within the homologous arms, yielding a 5'-phosphate and a 3'-hydroxyl group; requires a central core of homology in the junction. The consensus cleavage sequence is 5'-(A/T)TT(C/G)-3'. Cleavage occurs on the 3'-side of the TT dinucleotide at the point of strand exchange. HJ branch migration catalyzed by RuvA-RuvB allows RuvC to scan DNA until it finds its consensus sequence, where it cleaves and resolves the cruciform DNA. This Anaplasma marginale (strain St. Maries) protein is Crossover junction endodeoxyribonuclease RuvC.